The following is a 178-amino-acid chain: Peptide deformylase (178 aa).

Fe cation contacts are provided by Cys-92 and His-134. Residue Glu-135 is part of the active site. His-138 lines the Fe cation pocket.

Belongs to the polypeptide deformylase family. The cofactor is Fe(2+).

The catalysed reaction is N-terminal N-formyl-L-methionyl-[peptide] + H2O = N-terminal L-methionyl-[peptide] + formate. In terms of biological role, removes the formyl group from the N-terminal Met of newly synthesized proteins. Requires at least a dipeptide for an efficient rate of reaction. N-terminal L-methionine is a prerequisite for activity but the enzyme has broad specificity at other positions. The polypeptide is Peptide deformylase (Alkalilimnicola ehrlichii (strain ATCC BAA-1101 / DSM 17681 / MLHE-1)).